The chain runs to 425 residues: Calreticulin-1 (425 aa).

An N-terminal signal peptide occupies residues 1–22 (MAKLNPKFISLILFALVVIVSA). Asn59 carries N-linked (GlcNAc...) asparagine glycosylation. Cys108 and Cys140 are disulfide-bonded. Residues Tyr112, Lys114, Tyr131, and Asp138 each contribute to the an alpha-D-glucoside site. The N-linked (GlcNAc...) asparagine glycan is linked to Asn154. Repeat copies occupy residues 194 to 205 (KQTGSLYSDWDL), 213 to 224 (DPSAKKPEDWDD), 230 to 241 (DPEDTKPAGYDD), 248 to 259 (DTDAKKPEDWDD), 263 to 273 (GEWTAPTIPNP), 277 to 287 (GEWKPKKIKNP), and 291 to 301 (GKWKAPMIDNP). The tract at residues 194–259 (KQTGSLYSDW…DAKKPEDWDD (66 aa)) is 4 X approximate repeats. 2 stretches are compositionally biased toward basic and acidic residues: residues 213–235 (DPSA…EDTK) and 241–255 (DIPK…KKPE). Positions 213 to 281 (DPSAKKPEDW…NPEYNGEWKP (69 aa)) are disordered. The tract at residues 263–301 (GEWTAPTIPNPEYNGEWKPKKIKNPAYKGKWKAPMIDNP) is 3 X approximate repeats. Glu321 serves as a coordination point for an alpha-D-glucoside. Over residues 348–378 (EETWGKHKDAEKAAFDEAEKKREEEESKDAP) the composition is skewed to basic and acidic residues. Positions 348–425 (EETWGKHKDA…EETDAAHDEL (78 aa)) are disordered. Over residues 379 to 398 (AESDAEEEAEDDDNEGDDSD) the composition is skewed to acidic residues. Phosphoserine occurs at positions 381 and 397. N-linked (GlcNAc...) asparagine glycosylation is present at Asn399. Basic and acidic residues predominate over residues 399–412 (NESKSEETKEAEET). The Prevents secretion from ER signature appears at 422 to 425 (HDEL).

It belongs to the calreticulin family.

It is found in the endoplasmic reticulum lumen. Its function is as follows. Molecular calcium-binding chaperone promoting folding, oligomeric assembly and quality control in the ER via the calreticulin/calnexin cycle. This lectin may interact transiently with almost all of the monoglucosylated glycoproteins that are synthesized in the ER. The polypeptide is Calreticulin-1 (CRT1) (Arabidopsis thaliana (Mouse-ear cress)).